We begin with the raw amino-acid sequence, 183 residues long: Putative manganese efflux pump MntP 1 (183 aa).

Helical transmembrane passes span 6-26, 36-56, 64-84, 100-120, 130-150, and 158-178; these read LFLL…CIGI, MIFV…GGYI, IVPI…ILMI, IMYL…GFTT, LFMS…LGII, and ISII…LFGL.

It belongs to the MntP (TC 9.B.29) family.

The protein localises to the cell membrane. Its function is as follows. Probably functions as a manganese efflux pump. In Clostridium botulinum (strain Hall / ATCC 3502 / NCTC 13319 / Type A), this protein is Putative manganese efflux pump MntP 1.